The chain runs to 341 residues: Thymidine kinase (341 aa).

19–26 (GAYGIGKT) is an ATP binding site. Glu-48 (proton acceptor) is an active-site residue. Tyr-66 and Gln-90 together coordinate substrate. Arg-183 is a binding site for ATP. Arg-189 is a substrate binding site.

It belongs to the herpesviridae thymidine kinase family. Homodimer.

The catalysed reaction is thymidine + ATP = dTMP + ADP + H(+). Functionally, catalyzes the transfer of the gamma-phospho group of ATP to thymidine to generate dTMP in the salvage pathway of pyrimidine synthesis. The dTMP serves as a substrate for DNA polymerase during viral DNA replication. Allows the virus to be reactivated and to grow in non-proliferative cells lacking a high concentration of phosphorylated nucleic acid precursors. The polypeptide is Thymidine kinase (Varicella-zoster virus (strain Dumas) (HHV-3)).